A 625-amino-acid chain; its full sequence is Vicilin-like antimicrobial peptides 2-3 (625 aa).

Disordered regions lie at residues 120-152 (QQKRYEEQQREDEEKYEERMKEGDNKRDPQQRE) and 180-212 (RQHGRGGDLMNPQRGGSGRYEEGEEKQSDNPYY). Residues 198 to 212 (RYEEGEEKQSDNPYY) show a composition bias toward basic and acidic residues. 2 consecutive Cupin type-1 domains span residues 230-369 (SVLE…ERLR) and 414-584 (YNLF…KEVE). A disordered region spans residues 594–614 (IFFPGPRQHQQQSPRSTKQQQ). The span at 601 to 614 (QHQQQSPRSTKQQQ) shows a compositional bias: low complexity.

The protein belongs to the 7S seed storage protein family.

It localises to the secreted. Its function is as follows. Antimicrobial peptides 2b, 2c and 2d have antibacterial and antifungal activity against a range of species. The chain is Vicilin-like antimicrobial peptides 2-3 from Macadamia integrifolia (Macadamia nut).